We begin with the raw amino-acid sequence, 153 residues long: Superoxide dismutase [Cu-Zn] (153 aa).

Residues His45, His47, and His62 each coordinate Cu cation. Cys56 and Cys145 form a disulfide bridge. Residues His62, His70, His79, and Asp82 each contribute to the Zn(2+) site. His119 is a binding site for Cu cation.

This sequence belongs to the Cu-Zn superoxide dismutase family. In terms of assembly, homodimer. Cu cation is required as a cofactor. The cofactor is Zn(2+).

It is found in the cytoplasm. It carries out the reaction 2 superoxide + 2 H(+) = H2O2 + O2. Destroys radicals which are normally produced within the cells and which are toxic to biological systems. The protein is Superoxide dismutase [Cu-Zn] (SOD) of Schistosoma mansoni (Blood fluke).